The following is a 560-amino-acid chain: Serine/threonine-protein kinase TOS3 (560 aa).

In terms of domain architecture, Protein kinase spans 50–344 (FEILATLGNG…LADIKVHPFM (295 aa)). Residues 56–64 (LGNGQYGKV) and K79 each bind ATP. D189 serves as the catalytic Proton acceptor.

It belongs to the protein kinase superfamily. Ser/Thr protein kinase family. In terms of processing, autophosphorylated.

It catalyses the reaction L-seryl-[protein] + ATP = O-phospho-L-seryl-[protein] + ADP + H(+). It carries out the reaction L-threonyl-[protein] + ATP = O-phospho-L-threonyl-[protein] + ADP + H(+). Functionally, one of the three SNF1 protein kinases (with SAK1 and ELM1) which are required for growth on nonfermentable carbon sources and nonpreferred sugars and for response to environmental stress. Activates SNF1 by phosphorylation of its activation-loop 'Thr-210'. Required for the regulation by SNF1 of the transcription of a large set of genes, the modification the activity of metabolic enzymes, and the control of various nutrient-responsive cellular developmental processes. Also phosphorylates GAL83, MIG1 and SIP2. The protein is Serine/threonine-protein kinase TOS3 (TOS3) of Saccharomyces cerevisiae (strain YJM789) (Baker's yeast).